The chain runs to 493 residues: 6-aminohexanoate-cyclic-dimer hydrolase (493 aa).

Active-site charge relay system residues include lysine 72 and serine 150. The active-site Acyl-ester intermediate is the serine 174.

It belongs to the amidase family. Homodimer.

The catalysed reaction is 1,8-diazacyclotetradecane-2,9-dione + H2O = N-(6-aminohexanoyl)-6-aminohexanoate. It participates in xenobiotic degradation; nylon-6 oligomer degradation. With respect to regulation, strongly inhibited by 1 uM diisopropylphosphofluoridate and 10 uM p-chloromercuribenzoate but scarcely inhibited by 100 mM EDTA in vitro. Specifically catalyzes the hydrolysis of 6-aminohexanoic acid cyclic dimer (1,8-diazacyclotetradecane-2,9-dione) to form the linear dimer 6-aminohexanoyl-6-aminohexanoic acid. Is inactive on 6-aminohexanoic acid oligomers (degree of polymerization 2 to 6), various other cyclic amides, cyclic diamides, linear amides, oligopeptides, and casein. Allows the bacterium to grow on a medium containing 6-aminohexanoic acid cyclic dimer as the sole carbon and nitrogen sources. The sequence is that of 6-aminohexanoate-cyclic-dimer hydrolase (nylA) from Paenarthrobacter ureafaciens.